Here is a 387-residue protein sequence, read N- to C-terminus: Leucine aminopeptidase 1 (387 aa).

An N-terminal signal peptide occupies residues 1–18 (MKIRAALALSATASGVLA). Residues 19–87 (AVVPQQALLN…YPTLHQASNV (69 aa)) constitute a propeptide that is removed on maturation. An N-linked (GlcNAc...) asparagine glycan is attached at asparagine 179. Positions 187, 206, 245, and 272 each coordinate Zn(2+). Cysteine 321 and cysteine 325 are oxidised to a cystine. Histidine 354 is a Zn(2+) binding site.

The protein belongs to the peptidase M28 family. M28E subfamily. Monomer. Zn(2+) is required as a cofactor.

It is found in the secreted. Its function is as follows. Extracellular aminopeptidase that allows assimilation of proteinaceous substrates. The sequence is that of Leucine aminopeptidase 1 (lap1) from Aspergillus oryzae (strain ATCC 42149 / RIB 40) (Yellow koji mold).